The chain runs to 147 residues: Plasminogen receptor (KT) (147 aa).

Residues 1-52 (MGFIFSKSMNENMKNQQEFMVMHARLQLERQLIMQNEMRERQMAMQIAWSRE) are Extracellular-facing. The chain crosses the membrane as a helical span at residues 53-73 (FLKYFGTFFGIATISLAAGAI). The Cytoplasmic portion of the chain corresponds to 74–78 (KRKKP). Residues 79–99 (AFLIPIVPLSFIFTYQYDLGY) form a helical membrane-spanning segment. The Extracellular segment spans residues 100-147 (GTLLQRMKSEAEDILETEKTKLELPKGLITFESLEKARREQSKFFSDK).

As to quaternary structure, interacts with PLAT. Interacts with PLAUR. As to expression, expressed in adrenal medulla (pheochromocytoma).

It localises to the cell membrane. Its function is as follows. Receptor for plasminogen. Regulates urokinase plasminogen activator-dependent and stimulates tissue-type plasminogen activator-dependent cell surface plasminogen activation. Proposed to be part of a local catecholaminergic cell plasminogen activation system that regulates neuroendocrine prohormone processing. Involved in regulation of inflammatory response; regulates monocyte chemotactic migration and matrix metalloproteinase activation, such as of MMP2 and MMP9. This chain is Plasminogen receptor (KT) (Plgrkt), found in Rattus norvegicus (Rat).